The chain runs to 481 residues: Abietadienol/abietadienal oxidase (481 aa).

The helical transmembrane segment at 2-22 (ADQISLLLVVFTAAVALLHLI) threads the bilayer. Residue Cys430 participates in heme binding.

Belongs to the cytochrome P450 family. Requires heme as cofactor. As to expression, expressed in young tissues such as flushing buds and green bark tissues. Lower levels in mature needles and bark.

It is found in the membrane. It carries out the reaction abieta-7,13-dien-18-ol + 2 reduced [NADPH--hemoprotein reductase] + 2 O2 = abieta-7,13-dien-18-oate + 2 oxidized [NADPH--hemoprotein reductase] + 3 H2O + 3 H(+). Multifunctional and multisubstrate cytochrome P450 that oxidizes the respective carbon 18 of abietadienol, abietadienal, levopimaradienol, isopimara-7,15-dienol, isopimara-7,15-dienal, dehydroabietadienol, and dehydroabietadienal. The chain is Abietadienol/abietadienal oxidase (CYP720B1) from Pinus taeda (Loblolly pine).